The sequence spans 340 residues: DNA polymerase III subunit delta' (340 aa).

The DNA polymerase holoenzyme is a complex that contains 10 different types of subunits. These subunits are organized into 3 functionally essential subassemblies: the pol III core, the beta sliding clamp processivity factor and the clamp-loading complex. The pol III core (subunits alpha,epsilon and theta) contains the polymerase and the 3'-5' exonuclease proofreading activities. The polymerase is tethered to the template via the sliding clamp processivity factor. The clamp-loading complex assembles the beta processivity factor onto the primer template and plays a central role in the organization and communication at the replication fork. This complex contains delta, delta', psi and chi, and copies of either or both of two different DnaX proteins, gamma and tau. The composition of the holoenzyme is, therefore: (alpha,epsilon,theta)[2]-(gamma/tau)[3]-delta,delta', psi,chi-beta[4].

The enzyme catalyses DNA(n) + a 2'-deoxyribonucleoside 5'-triphosphate = DNA(n+1) + diphosphate. DNA polymerase III is a complex, multichain enzyme responsible for most of the replicative synthesis in bacteria. This DNA polymerase also exhibits 3' to 5' exonuclease activity. The polypeptide is DNA polymerase III subunit delta' (holB) (Yersinia pestis).